Here is a 425-residue protein sequence, read N- to C-terminus: Serine--tRNA ligase (425 aa).

Position 233-235 (233-235 (TAE)) interacts with L-serine. 264–266 (RRE) is an ATP binding site. An L-serine-binding site is contributed by Glu287. Residue 351–354 (EISS) participates in ATP binding. Ser385 serves as a coordination point for L-serine.

It belongs to the class-II aminoacyl-tRNA synthetase family. Type-1 seryl-tRNA synthetase subfamily. As to quaternary structure, homodimer. The tRNA molecule binds across the dimer.

It is found in the cytoplasm. The catalysed reaction is tRNA(Ser) + L-serine + ATP = L-seryl-tRNA(Ser) + AMP + diphosphate + H(+). It carries out the reaction tRNA(Sec) + L-serine + ATP = L-seryl-tRNA(Sec) + AMP + diphosphate + H(+). It functions in the pathway aminoacyl-tRNA biosynthesis; selenocysteinyl-tRNA(Sec) biosynthesis; L-seryl-tRNA(Sec) from L-serine and tRNA(Sec): step 1/1. Functionally, catalyzes the attachment of serine to tRNA(Ser). Is also able to aminoacylate tRNA(Sec) with serine, to form the misacylated tRNA L-seryl-tRNA(Sec), which will be further converted into selenocysteinyl-tRNA(Sec). This chain is Serine--tRNA ligase, found in Prochlorococcus marinus (strain MIT 9215).